The primary structure comprises 89 residues: MGCMKSKRRDPTQNSDSSEKVDGKPGKHGEKAVLVFSEIGSMEDSVRINPVLLDYAQRLSEEIVARAVQQWAEVDSRYSDIPYIECDVP.

The interval 1-29 is disordered; it reads MGCMKSKRRDPTQNSDSSEKVDGKPGKHG. Gly2 is lipidated: N-myristoyl glycine. Positions 17 to 29 are enriched in basic and acidic residues; the sequence is SSEKVDGKPGKHG.

This sequence belongs to the small membrane AKAP family. In terms of processing, may be palmitoylated at Cys-3.

It localises to the cell membrane. Functionally, binds to type I regulatory subunits of protein kinase A and may anchor/target them to the plasma membrane. The chain is Small membrane A-kinase anchor protein from Danio rerio (Zebrafish).